The chain runs to 565 residues: NAD-dependent malic enzyme (565 aa).

Tyrosine 104 (proton donor) is an active-site residue. Position 157 (arginine 157) interacts with NAD(+). Lysine 175 serves as the catalytic Proton acceptor. 3 residues coordinate a divalent metal cation: glutamate 246, aspartate 247, and aspartate 270. NAD(+) contacts are provided by aspartate 270 and asparagine 418.

The protein belongs to the malic enzymes family. Homotetramer. It depends on Mg(2+) as a cofactor. Requires Mn(2+) as cofactor.

The catalysed reaction is (S)-malate + NAD(+) = pyruvate + CO2 + NADH. The enzyme catalyses oxaloacetate + H(+) = pyruvate + CO2. In Sodalis glossinidius (strain morsitans), this protein is NAD-dependent malic enzyme.